A 719-amino-acid polypeptide reads, in one-letter code: Eukaryotic translation initiation factor 3 subunit B (719 aa).

Residues 60–147 form the RRM domain; the sequence is NILVVDNLPV…HIFAVNMFDD (88 aa). WD repeat units lie at residues 167-207, 511-553, and 555-598; these read VPGE…KPEL, LKGK…TMAS, and EHFM…LYRI. Basic and acidic residues predominate over residues 675–686; sequence EKMERQKLRDGE. A disordered region spans residues 675 to 698; the sequence is EKMERQKLRDGEASDEEEEYEAKE. Over residues 687–698 the composition is skewed to acidic residues; the sequence is ASDEEEEYEAKE.

Belongs to the eIF-3 subunit B family. In terms of assembly, component of the eukaryotic translation initiation factor 3 (eIF-3) complex.

The protein resides in the cytoplasm. Functionally, RNA-binding component of the eukaryotic translation initiation factor 3 (eIF-3) complex, which is involved in protein synthesis of a specialized repertoire of mRNAs and, together with other initiation factors, stimulates binding of mRNA and methionyl-tRNAi to the 40S ribosome. The eIF-3 complex specifically targets and initiates translation of a subset of mRNAs involved in cell proliferation. This is Eukaryotic translation initiation factor 3 subunit B (TIF3B1) from Nicotiana tabacum (Common tobacco).